The chain runs to 72 residues: Aurein-2.5 (72 aa).

The N-terminal stretch at 1 to 22 (MAFLKKSLFLVLFLGLVSLSIC) is a signal peptide. The propeptide occupies 23–49 (EKEKRQNEEDEDENEAANHEEGSEEKR). The disordered stretch occupies residues 27 to 47 (RQNEEDEDENEAANHEEGSEE). The span at 38–47 (AANHEEGSEE) shows a compositional bias: basic and acidic residues. At L65 the chain carries Leucine amide. A propeptide spanning residues 69–72 (NDLE) is cleaved from the precursor.

It belongs to the frog skin active peptide (FSAP) family. Aurein subfamily. As to quaternary structure, may be monomeric or may oligomerize as homodimers or homotrimers in Gram-positive and Gram-negative bacteria mimetic membranes. Post-translationally, C-terminal amidation enhances antibacterial activity. This increase may be due to stabilization of the alpha-helical structure at the membrane interface. Expressed by the skin dorsal glands.

Its subcellular location is the secreted. The protein localises to the target cell membrane. Functionally, amphipathic alpha-helical antimicrobial peptide with moderate to potent activity against Gram-positive bacteria, Gram-negative bacteria and fungi. Also shows a weak activity against biofilm of both Gram-positive and Gram-negative bacteria. Probably acts by disturbing membrane functions with its amphipathic structure. Kills fungi via membranolytic action. Enhanced sterol levels in lipid composition membranes reduce interaction of this peptide with membranes, having a protective effect against the lytic ability of the peptide. Shows anticancer activity. The sequence is that of Aurein-2.5 from Ranoidea aurea (Green and golden bell frog).